Consider the following 744-residue polypeptide: Elongation factor G, mitochondrial (744 aa).

A mitochondrion-targeting transit peptide spans 1 to 33 (MTISNLIRSRCSLAAAKSFLENVKSFSSHATFA). The region spanning 39-317 (EKIRNIGISA…VLDYLPHPGE (279 aa)) is the tr-type G domain. GTP contacts are provided by residues 48–55 (AHIDSGKT), 115–119 (DTPGH), and 169–172 (NKLD).

The protein belongs to the TRAFAC class translation factor GTPase superfamily. Classic translation factor GTPase family. EF-G/EF-2 subfamily.

The protein resides in the mitochondrion. It participates in protein biosynthesis; polypeptide chain elongation. Functionally, mitochondrial GTPase that catalyzes the GTP-dependent ribosomal translocation step during translation elongation. During this step, the ribosome changes from the pre-translocational (PRE) to the post-translocational (POST) state as the newly formed A-site-bound peptidyl-tRNA and P-site-bound deacylated tRNA move to the P and E sites, respectively. Catalyzes the coordinated movement of the two tRNA molecules, the mRNA and conformational changes in the ribosome. This chain is Elongation factor G, mitochondrial, found in Anopheles gambiae (African malaria mosquito).